A 168-amino-acid polypeptide reads, in one-letter code: Lipoprotein signal peptidase (168 aa).

Transmembrane regions (helical) follow at residues 5–25, 37–57, 59–79, and 85–105; these read SPYA…KHLV, LVPF…SMFS, FGDT…LYLA, and GHVI…GNLI. Active-site residues include aspartate 115 and aspartate 133. A helical transmembrane segment spans residues 125 to 145; that stretch reads SFAIFNLADAFISVGAALVVF.

It belongs to the peptidase A8 family.

It is found in the cell inner membrane. The catalysed reaction is Release of signal peptides from bacterial membrane prolipoproteins. Hydrolyzes -Xaa-Yaa-Zaa-|-(S,diacylglyceryl)Cys-, in which Xaa is hydrophobic (preferably Leu), and Yaa (Ala or Ser) and Zaa (Gly or Ala) have small, neutral side chains.. It participates in protein modification; lipoprotein biosynthesis (signal peptide cleavage). Functionally, this protein specifically catalyzes the removal of signal peptides from prolipoproteins. The sequence is that of Lipoprotein signal peptidase from Mesorhizobium japonicum (strain LMG 29417 / CECT 9101 / MAFF 303099) (Mesorhizobium loti (strain MAFF 303099)).